The following is a 323-amino-acid chain: Rhazimal reductase 2 (323 aa).

Residue D53 participates in NADP(+) binding. Y58 functions as the Proton donor in the catalytic mechanism. NADP(+) contacts are provided by residues 167-168 (SN), Q189, 215-220 (WSPLLS), and 289-297 (DQIQQIPQR).

The protein belongs to the aldo/keto reductase family. Monomer.

The catalysed reaction is rhazimol + NADP(+) = rhazimal + NADPH + 2 H(+). It functions in the pathway alkaloid biosynthesis. Oxidoreductase involved in the biosynthesis of akuammilan monoterpene indole alkaloids (MIAs) natural products, components with various biological properties such as antidiabetic, antibacterial, anti-inflammatory, anticancer, and antimalarial activities. Catalyzes the conversion of rhazimal to rhazimol. This chain is Rhazimal reductase 2, found in Alstonia scholaris (Dogbane).